Here is a 92-residue protein sequence, read N- to C-terminus: Late cornified envelope protein 3E (92 aa).

Residues Met1–Cys10 show a composition bias toward low complexity. Disordered regions lie at residues Met1–Pro22 and Arg64–Cys92. Over residues Gln11–Pro22 the composition is skewed to pro residues. Gly residues predominate over residues Gly76 to Cys92.

This sequence belongs to the LCE family. In terms of assembly, interacts with CYSRT1. In terms of tissue distribution, skin-specific. Expression was readily detected in adult trunk skin, adult arm skin, fetal skin, penal skin, vulva, esophagus and tongue. Not expressed in the cervix, rectum, lung, colon, or placenta.

In terms of biological role, precursors of the cornified envelope of the stratum corneum. This is Late cornified envelope protein 3E (LCE3E) from Homo sapiens (Human).